The following is a 621-amino-acid chain: tRNA 5-methylaminomethyl-2-thiouridine biosynthesis bifunctional protein MnmC (621 aa).

Residues 1-222 (MKNANLSFKG…KRQMSSAVLE (222 aa)) form a tRNA (mnm(5)s(2)U34)-methyltransferase region. The segment at 250-621 (IGTGVAGLAT…LIRKLKKGLK (372 aa)) is FAD-dependent cmnm(5)s(2)U34 oxidoreductase.

In the N-terminal section; belongs to the methyltransferase superfamily. tRNA (mnm(5)s(2)U34)-methyltransferase family. This sequence in the C-terminal section; belongs to the DAO family. It depends on FAD as a cofactor.

The protein resides in the cytoplasm. The catalysed reaction is 5-aminomethyl-2-thiouridine(34) in tRNA + S-adenosyl-L-methionine = 5-methylaminomethyl-2-thiouridine(34) in tRNA + S-adenosyl-L-homocysteine + H(+). Functionally, catalyzes the last two steps in the biosynthesis of 5-methylaminomethyl-2-thiouridine (mnm(5)s(2)U) at the wobble position (U34) in tRNA. Catalyzes the FAD-dependent demodification of cmnm(5)s(2)U34 to nm(5)s(2)U34, followed by the transfer of a methyl group from S-adenosyl-L-methionine to nm(5)s(2)U34, to form mnm(5)s(2)U34. In Campylobacter concisus (strain 13826), this protein is tRNA 5-methylaminomethyl-2-thiouridine biosynthesis bifunctional protein MnmC.